Here is a 744-residue protein sequence, read N- to C-terminus: Translation initiation factor IF-2, chloroplastic (744 aa).

The tract at residues 113–146 is disordered; it reads NSEGSFKSGKQKKKEKGKHKQNVNKDIHHTKNNR. Basic residues predominate over residues 121–134; it reads GKQKKKEKGKHKQN. One can recognise a tr-type G domain in the interval 244–417; the sequence is NRAPIVTILG…CSLAEFINLK (174 aa). The segment at 253 to 260 is G1; it reads GHVDHGKT. 253 to 260 serves as a coordination point for GTP; it reads GHVDHGKT. A G2 region spans residues 278–282; the sequence is GITQS. The G3 stretch occupies residues 303 to 306; that stretch reads DTPG. Residues 303-307 and 357-360 contribute to the GTP site; these read DTPGH and NKID. The tract at residues 357 to 360 is G4; sequence NKID. Residues 393 to 395 form a G5 region; the sequence is SAL.

It belongs to the TRAFAC class translation factor GTPase superfamily. Classic translation factor GTPase family. IF-2 subfamily.

It is found in the plastid. The protein localises to the chloroplast. Functionally, one of the essential components for the initiation of protein synthesis. Protects formylmethionyl-tRNA from spontaneous hydrolysis and promotes its binding to the 30S ribosomal subunits. Also involved in the hydrolysis of GTP during the formation of the 70S ribosomal complex. This is Translation initiation factor IF-2, chloroplastic (infB) from Gracilaria tenuistipitata var. liui (Red alga).